The primary structure comprises 819 residues: Transferrin 2 (819 aa).

Positions 1–21 (MASSLVFVALVGALCFTLANA) are cleaved as a signal peptide. The region spanning 33 to 373 (MVWCTKSQAE…QYDQYRSERL (341 aa)) is the Transferrin-like 1 domain. Cystine bridges form between Cys36–Cys78 and Cys46–Cys69. N-linked (GlcNAc...) asparagine glycans are attached at residues Asn48 and Asn66. The Fe(3+) site is built by Asp93 and Tyr121. 3 disulfide bridges follow: Cys147–Cys237, Cys190–Cys213, and Cys273–Cys287. Hydrogencarbonate is bound by residues Ala155 and Gly156. An N-linked (GlcNAc...) asparagine glycan is attached at Asn187. Fe(3+) is bound at residue Tyr231. The interval 325-361 (GTRDDQSRQGGQSFNSRNNINDQNAYGQFDNNDPYRT) is disordered. The span at 332–361 (RQGGQSFNSRNNINDQNAYGQFDNNDPYRT) shows a compositional bias: polar residues. Residue Asn388 is glycosylated (N-linked (GlcNAc...) asparagine). One can recognise a Transferrin-like 2 domain in the interval 450 to 796 (MTLCVTSENE…FMRARRITDC (347 aa)). 2 disulfides stabilise this stretch: Cys453–Cys490 and Cys463–Cys481. Fe(3+) contacts are provided by Asp505 and Tyr533. Disulfide bonds link Cys557–Cys646, Cys599–Cys621, Cys618–Cys629, and Cys687–Cys701. Residues Thr559, Ala565, and Gly566 each contribute to the hydrogencarbonate site. A glycan (N-linked (GlcNAc...) asparagine) is linked at Asn720. Cys796 carries the GPI-anchor amidated cysteine lipid modification. A propeptide spans 797-819 (YAGASQLALSVGLLLVGSLVAML) (removed in mature form).

Belongs to the transferrin family. Forms a complex composed of septa junction proteins Nrx-IV/Nrx, Tsf2/MTf, Cont and Nrg during late embryogenesis.

The protein resides in the apicolateral cell membrane. The protein localises to the cell junction. It localises to the septate junction. Functionally, iron-binding protein and component of septate junctions that form the paracellular permeability barrier in epithelial tissues. In an iron-dependent manner, required for septate junction assembly during epithelial maturation in embryos and mature septa junctions stability. The polypeptide is Transferrin 2 (Drosophila melanogaster (Fruit fly)).